Here is a 244-residue protein sequence, read N- to C-terminus: Small ribosomal subunit protein eS4 (244 aa).

The segment covering 1–14 (MANKGPRKHLKRLP) has biased composition (basic residues). Residues 1 to 36 (MANKGPRKHLKRLPAPKNWQISRKTNKYTTRPSAGP) form a disordered region. Residues 19-32 (WQISRKTNKYTTRP) show a composition bias toward polar residues. One can recognise an S4 RNA-binding domain in the interval 43-106 (LPLLLVLRDL…NESFLVVLDE (64 aa)).

It belongs to the eukaryotic ribosomal protein eS4 family.

The sequence is that of Small ribosomal subunit protein eS4 from Methanococcus aeolicus (strain ATCC BAA-1280 / DSM 17508 / OCM 812 / Nankai-3).